Consider the following 382-residue polypeptide: Dihydroflavonol 4-reductase (382 aa).

Positions 44 and 163 each coordinate NADP(+).

Belongs to the NAD(P)-dependent epimerase/dehydratase family. Dihydroflavonol-4-reductase subfamily.

The catalysed reaction is a (2R,3S,4S)-leucoanthocyanidin + NADP(+) = a (2R,3R)-dihydroflavonol + NADPH + H(+). It catalyses the reaction (2S)-flavan-4-ol + NADP(+) = (2S)-flavanone + NADPH + H(+). It participates in pigment biosynthesis; anthocyanin biosynthesis. Functionally, bifunctional enzyme involved in flavonoid metabolism. The chain is Dihydroflavonol 4-reductase (DFRA) from Arabidopsis thaliana (Mouse-ear cress).